The following is a 351-amino-acid chain: N-acetyl-gamma-glutamyl-phosphate reductase (351 aa).

Cysteine 154 is an active-site residue.

It belongs to the NAGSA dehydrogenase family. Type 1 subfamily.

Its subcellular location is the cytoplasm. The catalysed reaction is N-acetyl-L-glutamate 5-semialdehyde + phosphate + NADP(+) = N-acetyl-L-glutamyl 5-phosphate + NADPH + H(+). It participates in amino-acid biosynthesis; L-arginine biosynthesis; N(2)-acetyl-L-ornithine from L-glutamate: step 3/4. Its function is as follows. Catalyzes the NADPH-dependent reduction of N-acetyl-5-glutamyl phosphate to yield N-acetyl-L-glutamate 5-semialdehyde. The polypeptide is N-acetyl-gamma-glutamyl-phosphate reductase (Synechocystis sp. (strain ATCC 27184 / PCC 6803 / Kazusa)).